The chain runs to 54 residues: H-bracotoxin-Cf4 (54 aa).

A signal peptide spans 1-21 (MSKLFIFFLLVALLAFVSSEA). 3 disulfide bridges follow: Cys-24–Cys-39, Cys-31–Cys-43, and Cys-38–Cys-53.

Expressed by the venom duct.

It is found in the secreted. In terms of biological role, this endoparasitoid wasp peptide has a role in disruption of the cellular host immune response, since it reduces the capacity of D.saccharalis hemocytes to encapsulate foreign bodies. On the other hand, it shows no effect on the humoral immune response, since it has no effect on phenoloxidase activity. The protein is H-bracotoxin-Cf4 of Cotesia flavipes (Parasitic wasp).